The sequence spans 371 residues: Alginate lyase (371 aa).

An N-terminal signal peptide occupies residues Met1–Ala28. Substrate contacts are provided by residues Ser67–Lys68, His140–Thr141, and Tyr258.

This sequence belongs to the polysaccharide lyase 5 family.

It is found in the periplasm. The enzyme catalyses Eliminative cleavage of alginate to give oligosaccharides with 4-deoxy-alpha-L-erythro-hex-4-enuronosyl groups at their non-reducing ends and beta-D-mannuronate at their reducing end.. Catalyzes the depolymerization of alginate by cleaving the beta-1,4 glycosidic bond between two adjacent sugar residues via a beta-elimination mechanism. May serve to degrade mislocalized alginate that is trapped in the periplasmic space. The polypeptide is Alginate lyase (Pseudomonas putida (strain ATCC 47054 / DSM 6125 / CFBP 8728 / NCIMB 11950 / KT2440)).